A 1682-amino-acid polypeptide reads, in one-letter code: Collagen alpha-4(IV) chain (1682 aa).

The N-terminal stretch at 1–32 (MRCFFRWTKSFVTAPWSLIFILFTIQYEYGSG) is a signal peptide. Residues 31–56 (SGKKYGGPCGGRNCSVCQCFPEKGSR) are 7S domain. N-linked (GlcNAc...) asparagine glycosylation is present at Asn43. Disordered stretches follow at residues 56-255 (RGHP…VQPP) and 379-1453 (PGPP…FGPG). A triple-helical region region spans residues 57-1451 (GHPGPLGPQG…TGDPGPKGFG (1395 aa)). The Cell attachment site motif lies at 86 to 88 (RGD). Over residues 103–116 (PTGVPGFPGVDGVP) the composition is skewed to low complexity. An N-linked (GlcNAc...) asparagine glycan is attached at Asn134. Short sequence motifs (cell attachment site) lie at residues 137–139 (RGD) and 181–183 (RGD). Residues 396–410 (MGPPGPPGVPGPPGF) are compositionally biased toward pro residues. Residues 411-426 (PGEAGVPGRLDCAPGK) are compositionally biased toward low complexity. Positions 487 to 500 (PPGPMGPPGPPGPP) are enriched in pro residues. Residues 578 to 601 (DGGDGRPGERGDPGPRGDHKDAAP) are compositionally biased toward basic and acidic residues. 2 consecutive short sequence motifs (cell attachment site) follow at residues 587 to 589 (RGD) and 593 to 595 (RGD). Positions 609-621 (LPGPPGRTGPEGP) are enriched in pro residues. Low complexity predominate over residues 632–647 (QRGLPGEPGRPGTRGF). A glycan (N-linked (GlcNAc...) asparagine) is linked at Asn661. Residues 665-682 (PGKPGLPGLDGPPGLKGF) are compositionally biased toward low complexity. The Cell attachment site signature appears at 716–718 (RGD). 2 stretches are compositionally biased toward low complexity: residues 742–758 (PGKD…AFGD) and 857–902 (PAGM…LPGL). 2 stretches are compositionally biased toward basic and acidic residues: residues 911–929 (ERGK…EVGE) and 938–950 (DLGE…DRGL). The segment covering 969-978 (GPPGDGGFSG) has biased composition (gly residues). 2 short sequence motifs (cell attachment site) span residues 980–982 (RGD) and 992–994 (RGD). Over residues 998–1010 (DGLPGLHRGQPGI) the composition is skewed to low complexity. A compositionally biased stretch (pro residues) spans 1011–1025 (DGPPGPPGPPGPPGS). A compositionally biased stretch (low complexity) spans 1034-1044 (FPGFPGDQGDP). A Cell attachment site motif is present at residues 1144–1146 (RGD). 5 stretches are compositionally biased toward pro residues: residues 1223 to 1235 (PGPP…PGPA), 1248 to 1272 (DPGP…PPGS), 1289 to 1304 (PGPP…PGCQ), 1340 to 1351 (PGPPGRKGPVGP), and 1435 to 1444 (APGPPGPTGD). A Collagen IV NC1 domain is found at 1457–1682 (GFLLVLHSQT…SRCQVCMKHS (226 aa)). Intrachain disulfides connect Cys1472/Cys1561, Cys1505/Cys1558, Cys1517/Cys1523, Cys1580/Cys1678, Cys1614/Cys1675, and Cys1626/Cys1633.

Belongs to the type IV collagen family. As to quaternary structure, there are six type IV collagen isoforms, alpha 1(IV)-alpha 6(IV), each of which can form a triple helix structure with 2 other chains to generate type IV collagen network. The alpha 3(IV) chain forms a triple helical protomer with alpha 4(IV) and alpha 5(IV); this triple helical structure dimerizes through NC1-NC1 domain interactions such that the alpha 3(IV), alpha 4(IV) and alpha 5(IV) chains of one protomer connect with the alpha 5(IV), alpha 4(IV) and alpha 3(IV) chains of the opposite protomer, respectively. Associates with LAMB2 at the neuromuscular junction and in GBM. Prolines at the third position of the tripeptide repeating unit (G-X-Y) are hydroxylated in some or all of the chains. Post-translationally, type IV collagens contain numerous cysteine residues which are involved in inter- and intramolecular disulfide bonding. 12 of these, located in the NC1 domain, are conserved in all known type IV collagens. In terms of processing, the trimeric structure of the NC1 domains is stabilized by covalent bonds between Lys and Met residues. In terms of tissue distribution, expressed in Bruch's membrane, outer plexiform layer, inner nuclear layer, inner plexiform layer, ganglion cell layer, inner limiting membrane and around the blood vessels of the retina (at protein level). Highly expressed in kidney and lung. Detected at lower levels in heart, muscle and skin.

The protein resides in the secreted. It is found in the extracellular space. Its subcellular location is the extracellular matrix. The protein localises to the basement membrane. Its function is as follows. Type IV collagen is the major structural component of glomerular basement membranes (GBM), forming a 'chicken-wire' meshwork together with laminins, proteoglycans and entactin/nidogen. The protein is Collagen alpha-4(IV) chain of Mus musculus (Mouse).